Consider the following 413-residue polypeptide: Type II methyltransferase M.NaeI (413 aa).

The region spanning 4–317 is the SAM-dependent MTase C5-type domain; that stretch reads LEVVEICAGA…KRIRAALNME (314 aa). Residue Cys78 is part of the active site.

It belongs to the class I-like SAM-binding methyltransferase superfamily. C5-methyltransferase family.

The catalysed reaction is a 2'-deoxycytidine in DNA + S-adenosyl-L-methionine = a 5-methyl-2'-deoxycytidine in DNA + S-adenosyl-L-homocysteine + H(+). Its function is as follows. A methylase that recognizes the double-stranded sequence 5'-GCCGGC-3', methylates C-? on both strands, and protects the DNA from cleavage by the NaeI endonuclease. In Lentzea aerocolonigenes (Lechevalieria aerocolonigenes), this protein is Type II methyltransferase M.NaeI.